Consider the following 64-residue polypeptide: Arasin 1 (64 aa).

The N-terminal stretch at 1 to 25 (MERRTLLVVLLVCSCVVAAAAEASP) is a signal peptide. The interval 22-43 (EASPSRWPSPGRPRPFPGRPKP) is disordered. Residues 26–48 (SRWPSPGRPRPFPGRPKPIFRPR) are pro/Arg-rich region responsible for antibacterial and antifungal activity. Residues 31 to 43 (PGRPRPFPGRPKP) are compositionally biased toward pro residues. Residues 49 to 62 (PCNCYAPPCPCDRW) are cystein-containing C-terminal region important for stability but not essential for antimicrobial activity. Disulfide bonds link Cys50–Cys59 and Cys52–Cys57. Residues 63-64 (RH) constitute a propeptide that is removed on maturation.

Interacts with chitin through the N-terminal region (26-48). This interaction may be important, since chitin is a component of the fungal cell wall, as well as of the crab exoskeleton (permitting a possible action of arasin in wound healing in case of lesions). Disulfide bonds are important for activity especially against Gram-negative bacteria, since the linearization of the peptide causes a strong decrease of activity on these bacteria. In terms of tissue distribution, mainly expressed in hemocytes. No or very low expression in heart, gills, inestines, and epidermis.

In terms of biological role, antimicrobial peptide that has a large activity spectrum with activity against Gram-positive, Gram-negative bacteria, as well as against fungi. Shows activity at micromolar concentrations. Displays minimal inhibitory concentration (MIC) values lower than minimal bactericidal concentrations (MBC). Synthetic peptides with similar activities than the full length peptide (composed of the first 23 or 25 amino acids (Arasin 1(26-48) or Arasin 1(26-50))) may have a dual mode of action depending on the peptide concentrations. At MIC concentrations, the peptide penetrates into the cytoplasm of target cells (tested on the Gram-negative E.coli). The two inner membrane proteins YgdD and SbmA may be required for this uptake. At concentrations higher than MIC, arasin may act by disrupting membranes. Full-length and N-terminal peptides do not show hemolytic activity. The polypeptide is Arasin 1 (Hyas araneus (Atlantic lyre crab)).